A 438-amino-acid polypeptide reads, in one-letter code: Flagellum-specific ATP synthase (438 aa).

The tract at residues 119-139 (GLSPVSTEQSPPNPMKRPPIR) is disordered. Position 165–172 (165–172 (AGSGVGKS)) interacts with ATP.

This sequence belongs to the ATPase alpha/beta chains family.

It localises to the cytoplasm. The enzyme catalyses ATP + H2O + 4 H(+)(in) = ADP + phosphate + 5 H(+)(out). Its function is as follows. Probable catalytic subunit of a protein translocase for flagellum-specific export, or a proton translocase involved in local circuits at the flagellum. This is Flagellum-specific ATP synthase (fliI) from Bacillus subtilis (strain 168).